A 1145-amino-acid polypeptide reads, in one-letter code: Trafficking protein particle complex subunit 10 (1145 aa).

It belongs to the TMEM1 family. As to quaternary structure, part of the multisubunit TRAPP (transport protein particle) complex. Interacts with Shal (via C-terminal dendritic targeting motif). In terms of tissue distribution, co-expressed with Shal in the nervous system.

It localises to the golgi apparatus. The protein localises to the cis-Golgi network. The protein resides in the cell projection. Its subcellular location is the dendrite. It is found in the perikaryon. Its function is as follows. May play a role in vesicular transport from endoplasmic reticulum to Golgi. Has a role in one of the several mechanisms underlying dendritic localization of Shal channels. This is Trafficking protein particle complex subunit 10 (SIDL) from Drosophila melanogaster (Fruit fly).